The primary structure comprises 217 residues: Thiopurine S-methyltransferase (217 aa).

Residues Trp-10, Leu-45, Glu-66, and Arg-127 each coordinate S-adenosyl-L-methionine.

Belongs to the class I-like SAM-binding methyltransferase superfamily. TPMT family.

It localises to the cytoplasm. The enzyme catalyses S-adenosyl-L-methionine + a thiopurine = S-adenosyl-L-homocysteine + a thiopurine S-methylether.. The protein is Thiopurine S-methyltransferase of Acinetobacter baylyi (strain ATCC 33305 / BD413 / ADP1).